The chain runs to 113 residues: Large ribosomal subunit protein bL19 (113 aa).

Belongs to the bacterial ribosomal protein bL19 family.

In terms of biological role, this protein is located at the 30S-50S ribosomal subunit interface and may play a role in the structure and function of the aminoacyl-tRNA binding site. This chain is Large ribosomal subunit protein bL19, found in Mycolicibacterium gilvum (strain PYR-GCK) (Mycobacterium gilvum (strain PYR-GCK)).